A 688-amino-acid polypeptide reads, in one-letter code: Glycine--tRNA ligase beta subunit (688 aa).

The protein belongs to the class-II aminoacyl-tRNA synthetase family. As to quaternary structure, tetramer of two alpha and two beta subunits.

The protein resides in the cytoplasm. It carries out the reaction tRNA(Gly) + glycine + ATP = glycyl-tRNA(Gly) + AMP + diphosphate. This is Glycine--tRNA ligase beta subunit from Colwellia psychrerythraea (strain 34H / ATCC BAA-681) (Vibrio psychroerythus).